A 221-amino-acid polypeptide reads, in one-letter code: Endo-1,4-beta-xylanase 1 (221 aa).

The N-terminal stretch at 1 to 22 (MKFFATIAALVVAAVAAPVAEA) is a signal peptide. The 193-residue stretch at 29–221 (PMLIERAGPG…GTGSASVTVS (193 aa)) folds into the GH11 domain. Catalysis depends on glutamate 114, which acts as the Nucleophile. Glutamate 208 functions as the Proton donor in the catalytic mechanism.

Belongs to the glycosyl hydrolase 11 (cellulase G) family.

The protein resides in the secreted. It carries out the reaction Endohydrolysis of (1-&gt;4)-beta-D-xylosidic linkages in xylans.. The protein operates within glycan degradation; xylan degradation. Its function is as follows. Endo-1,4-beta-xylanase involved in the hydrolysis of xylan, a major structural heterogeneous polysaccharide found in plant biomass representing the second most abundant polysaccharide in the biosphere, after cellulose. Hydrolyzes xylans from oat spelt and birchwood at similar rates, but it has no detectable activity toward Avicel or carboxymethyl cellulose. The sequence is that of Endo-1,4-beta-xylanase 1 (xynI) from Aureobasidium pullulans (Black yeast).